Consider the following 83-residue polypeptide: Sec-independent protein translocase protein TatA (83 aa).

A helical membrane pass occupies residues 2 to 22 (GLGGISIWQLLIVLVIVLLLF). 2 stretches are compositionally biased toward basic and acidic residues: residues 50 to 65 (AAKQEAEEAEQKKVAA) and 74 to 83 (AEQKEKTEAK). Residues 50 to 83 (AAKQEAEEAEQKKVAAEEAAAAKTAEQKEKTEAK) form a disordered region.

Belongs to the TatA/E family. The Tat system comprises two distinct complexes: a TatABC complex, containing multiple copies of TatA, TatB and TatC subunits, and a separate TatA complex, containing only TatA subunits. Substrates initially bind to the TatABC complex, which probably triggers association of the separate TatA complex to form the active translocon.

The protein resides in the cell inner membrane. Functionally, part of the twin-arginine translocation (Tat) system that transports large folded proteins containing a characteristic twin-arginine motif in their signal peptide across membranes. TatA could form the protein-conducting channel of the Tat system. In Saccharophagus degradans (strain 2-40 / ATCC 43961 / DSM 17024), this protein is Sec-independent protein translocase protein TatA.